A 146-amino-acid chain; its full sequence is Large ribosomal subunit protein uL15 (146 aa).

Positions Met-1–Leu-61 are disordered. Basic residues predominate over residues Thr-30–Lys-39.

This sequence belongs to the universal ribosomal protein uL15 family. Part of the 50S ribosomal subunit.

Its function is as follows. Binds to the 23S rRNA. This Geotalea uraniireducens (strain Rf4) (Geobacter uraniireducens) protein is Large ribosomal subunit protein uL15.